The chain runs to 119 residues: Chorion class CA protein ERA.5 (119 aa).

Positions 1 to 21 (MSTYTFVLFCLQICLIQNVYS) are cleaved as a signal peptide. A left arm region spans residues 22 to 55 (QCLGRVGPGGPPVGPYGGPLGGPGYGPVGYGGCG). The central domain stretch occupies residues 56-103 (GYGGSGIGNVAVAGELPVAGSSAVMGQVPVIGAVEFAGPACAVGSVSI). Positions 104–119 (SGACGPTCGCGGSPYY) are right arm.

The protein belongs to the chorion protein family.

This protein is one of many from the eggshell of the silk moth. This Bombyx mori (Silk moth) protein is Chorion class CA protein ERA.5 (ERA.5).